The chain runs to 699 residues: (E2-independent) E3 ubiquitin-conjugating enzyme FATS (699 aa).

The tract at residues 48 to 116 (MISSIVISQM…LGIPAPSDER (69 aa)) is required for interaction with p53/TP53. Disordered stretches follow at residues 107–134 (LGIP…GGPR), 443–473 (KPTR…ERRH), and 528–569 (KSED…PARS). Composition is skewed to basic and acidic residues over residues 113–129 (SDER…EERP) and 460–473 (CLSR…ERRH). Residues 116–224 (RGPEAELPPK…GLCERRKYWV (109 aa)) form a required for interaction with HDAC1 region. A compositionally biased stretch (pro residues) spans 534–545 (TPEPSPAAPSPA). Positions 571-699 (TLQEALEVRK…LDQLLQRNAV (129 aa)) are ALMS motif.

In terms of assembly, interacts with HDAC1; the interaction prevents binding of HDAC1 to CDKN1A/p21 and facilitates the acetylation and stabilization of CDKN1A/p21. Interacts with p53/TP53; the interaction inhibits binding of p53/TP53 and MDM2.

It is found in the cytoplasm. The protein resides in the cytoskeleton. Its subcellular location is the microtubule organizing center. It localises to the centrosome. Tumor suppressor that is required to sustain G2/M checkpoint after DNA damage. Acts as a p53/TP53 activator by inhibiting MDM2 binding to p53/TP53 and stimulating non-proteolytic polyubiquitination of p53/TP53. Exhibits ubiquitin ligase (E3) activity and assemble ubiquitin polymers through 'Lys-11'- (K11-), 'Lys-29'- (K29-) and 'Lys-63'- (K63)-linkages, independently of the ubiquitin-conjugating enzyme (E2). Promotes p53/TP53-dependent transcription of CDKN1A/p21, leading to robust checkpoint response. Mediates CDKN1A/p21 protein stability in a ubiquitin-independent manner. Interacts with HDAC1 and prevents binding of HDAC1 to CDKN1A/p21 and facilitates the acetylation and stabilization of CDKN1A/p21. May have a role in the assembly of primary cilia. The chain is (E2-independent) E3 ubiquitin-conjugating enzyme FATS from Homo sapiens (Human).